The chain runs to 488 residues: Probable phenylalanine--tRNA ligase alpha subunit (488 aa).

Residues 1 to 146 (MSIEQDILNL…KRKLVDINKK (146 aa)) form a contains the major tRNA-Phe binding sites region. Residues Thr315, 363–365 (QVE), and Tyr403 contribute to the L-phenylalanine site. Glu405 contributes to the Mg(2+) binding site. Phe429 contacts L-phenylalanine.

The protein belongs to the class-II aminoacyl-tRNA synthetase family. Phe-tRNA synthetase alpha subunit type 2 subfamily. In terms of assembly, tetramer of two alpha and two beta subunits. Requires Mg(2+) as cofactor.

Its subcellular location is the cytoplasm. The catalysed reaction is tRNA(Phe) + L-phenylalanine + ATP = L-phenylalanyl-tRNA(Phe) + AMP + diphosphate + H(+). This Enterocytozoon bieneusi (strain H348) (Microsporidian parasite) protein is Probable phenylalanine--tRNA ligase alpha subunit.